The sequence spans 205 residues: Meiotic nuclear division protein 1 homolog (205 aa).

The residue at position 2 (serine 2) is an N-acetylserine. Residues 84–173 are a coiled coil; that stretch reads HKLEVLESQL…EAANRWTDNI (90 aa).

This sequence belongs to the MND1 family. Heterodimer with PSMC3IP/HOP2. MND1-PSMC3IP interacts with DMC1 and RAD51 and binds preferentially to dsDNA.

The protein resides in the nucleus. Required for proper homologous chromosome pairing and efficient cross-over and intragenic recombination during meiosis. Stimulates both DMC1- and RAD51-mediated homologous strand assimilation, which is required for the resolution of meiotic double-strand breaks. This is Meiotic nuclear division protein 1 homolog from Homo sapiens (Human).